The primary structure comprises 500 residues: Glucose-6-phosphate isomerase (500 aa).

E332 serves as the catalytic Proton donor. Active-site residues include H363 and K473.

Belongs to the GPI family.

Its subcellular location is the cytoplasm. The catalysed reaction is alpha-D-glucose 6-phosphate = beta-D-fructose 6-phosphate. The protein operates within carbohydrate biosynthesis; gluconeogenesis. It participates in carbohydrate degradation; glycolysis; D-glyceraldehyde 3-phosphate and glycerone phosphate from D-glucose: step 2/4. Catalyzes the reversible isomerization of glucose-6-phosphate to fructose-6-phosphate. The chain is Glucose-6-phosphate isomerase from Rhizorhabdus wittichii (strain DSM 6014 / CCUG 31198 / JCM 15750 / NBRC 105917 / EY 4224 / RW1) (Sphingomonas wittichii).